Consider the following 572-residue polypeptide: Flagellin B (572 aa).

Belongs to the bacterial flagellin family. Heteromer of flaA and flaB.

It localises to the secreted. Its subcellular location is the bacterial flagellum. Functionally, flagellin is the subunit protein which polymerizes to form the filaments of bacterial flagella. This is Flagellin B (flaB) from Campylobacter jejuni subsp. jejuni serotype O:2 (strain ATCC 700819 / NCTC 11168).